Here is an 809-residue protein sequence, read N- to C-terminus: ATP-dependent zinc metalloprotease FTSH 3, mitochondrial (809 aa).

Residues 1–83 (MTMIFFSKLN…FANPRLRRFF (83 aa)) constitute a mitochondrion transit peptide. Basic and acidic residues predominate over residues 93 to 121 (YENYFPKDKQEPKSDQKSEHKEGSEKNEN). Residues 93–122 (YENYFPKDKQEPKSDQKSEHKEGSEKNENE) form a disordered region. A helical transmembrane segment spans residues 132–152 (FQNLLIPLLALAVFFSTFSFG). 362 to 369 (GPPGTGKT) contacts ATP. Histidine 586 lines the Zn(2+) pocket. Glutamate 587 is a catalytic residue. 2 residues coordinate Zn(2+): histidine 590 and aspartate 662. The disordered stretch occupies residues 776-809 (GFEETEKDSAATPTVEPVVDDGAPPPFEPQVVPT).

The protein in the N-terminal section; belongs to the AAA ATPase family. In the C-terminal section; belongs to the peptidase M41 family. Zn(2+) is required as a cofactor.

Its subcellular location is the mitochondrion inner membrane. Its function is as follows. Probable ATP-dependent zinc metallopeptidase. Involved in the assembly and/or stability of the complexes I and V of the mitochondrial oxidative phosphorylation system. The polypeptide is ATP-dependent zinc metalloprotease FTSH 3, mitochondrial (FTSH3) (Arabidopsis thaliana (Mouse-ear cress)).